The chain runs to 196 residues: SERTA domain-containing protein 3 (196 aa).

The disordered stretch occupies residues 1–21; that stretch reads MVGGLKRKHSDLEEEEERWEW. The region spanning 26–73 is the SERTA domain; that stretch reads LQSYQQALLRISLDKVQRSLGPRAPSLRRHVLIHNTLQQLQAALRLAP. The interval 104–125 is disordered; it reads TSMDGTEPPQNPVTPLGLQNEV.

As to quaternary structure, interacts with RPA2. (Microbial infection) Interacts with influenza virus PA, PB1 and PB2,leading to inhibition of RdRp complex assembly. In terms of assembly, (Microbial infection) Interacts with zika virus capsid protein.

The protein localises to the nucleus. Functionally, antiviral interferon-stimulated protein that plays a role in innate immunity and in the suppression of viruses through different mechanisms. Plays a role in the late phase response of TLR-induced immune effector expression. During influenza infection, interacts with PB2, PB1, and PA to disrupt the formation of the viral RdRp complex. Inhibits zika virus by interacting with the capsid protein in the nucleolus and reducing its abundance through proteasomal degradation. Strong transcriptional coactivator. This chain is SERTA domain-containing protein 3 (SERTAD3), found in Homo sapiens (Human).